Consider the following 348-residue polypeptide: Fructose-1,6-bisphosphatase class 1 (348 aa).

Mg(2+) contacts are provided by glutamate 104, aspartate 126, leucine 128, and aspartate 129. Residues 129–132, asparagine 221, tyrosine 249, and lysine 279 contribute to the substrate site; that span reads DGSS. Position 285 (glutamate 285) interacts with Mg(2+).

This sequence belongs to the FBPase class 1 family. As to quaternary structure, homotetramer. The cofactor is Mg(2+).

Its subcellular location is the cytoplasm. The catalysed reaction is beta-D-fructose 1,6-bisphosphate + H2O = beta-D-fructose 6-phosphate + phosphate. It functions in the pathway carbohydrate biosynthesis; Calvin cycle. The chain is Fructose-1,6-bisphosphatase class 1 from Thermosynechococcus vestitus (strain NIES-2133 / IAM M-273 / BP-1).